The following is a 181-amino-acid chain: MEGGCKVIITTSREPSKKTLELVNDLVNSLPGTSKIVRGKKSFITLLEEAVACGARYIAFIWERRGMPFALLFYDVINREWKPYMLKISGIKTRREFPVFISRRPPAKSAVIVDLSEGEVGDIFTEIFGYPILYSLDAVRGLFDTVVLIRRTDGYLVELLGSDLGPRASSIRIKKVVYRHV.

The Brix domain occupies 5-181 (CKVIITTSRE…RIKKVVYRHV (177 aa)).

In terms of biological role, probably involved in the biogenesis of the ribosome. The chain is Probable Brix domain-containing ribosomal biogenesis protein from Pyrobaculum aerophilum (strain ATCC 51768 / DSM 7523 / JCM 9630 / CIP 104966 / NBRC 100827 / IM2).